The primary structure comprises 307 residues: Methionyl-tRNA formyltransferase (307 aa).

Residue 108 to 111 (SLLP) coordinates (6S)-5,6,7,8-tetrahydrofolate.

This sequence belongs to the Fmt family.

It catalyses the reaction L-methionyl-tRNA(fMet) + (6R)-10-formyltetrahydrofolate = N-formyl-L-methionyl-tRNA(fMet) + (6S)-5,6,7,8-tetrahydrofolate + H(+). Functionally, attaches a formyl group to the free amino group of methionyl-tRNA(fMet). The formyl group appears to play a dual role in the initiator identity of N-formylmethionyl-tRNA by promoting its recognition by IF2 and preventing the misappropriation of this tRNA by the elongation apparatus. The chain is Methionyl-tRNA formyltransferase from Xanthomonas campestris pv. campestris (strain 8004).